A 572-amino-acid chain; its full sequence is Proline--tRNA ligase (572 aa).

This sequence belongs to the class-II aminoacyl-tRNA synthetase family. ProS type 1 subfamily. Homodimer.

It is found in the cytoplasm. The catalysed reaction is tRNA(Pro) + L-proline + ATP = L-prolyl-tRNA(Pro) + AMP + diphosphate. Catalyzes the attachment of proline to tRNA(Pro) in a two-step reaction: proline is first activated by ATP to form Pro-AMP and then transferred to the acceptor end of tRNA(Pro). As ProRS can inadvertently accommodate and process non-cognate amino acids such as alanine and cysteine, to avoid such errors it has two additional distinct editing activities against alanine. One activity is designated as 'pretransfer' editing and involves the tRNA(Pro)-independent hydrolysis of activated Ala-AMP. The other activity is designated 'posttransfer' editing and involves deacylation of mischarged Ala-tRNA(Pro). The misacylated Cys-tRNA(Pro) is not edited by ProRS. This chain is Proline--tRNA ligase, found in Alteromonas mediterranea (strain DSM 17117 / CIP 110805 / LMG 28347 / Deep ecotype).